Consider the following 219-residue polypeptide: MSILYALVARGTVVLAELSTTSTNASTIAKQILEKIPGNGDSHVSYSQDRYVFHVKRTDGLTVLCMADEDAGRRIPFSFLEDIHQRFVRTYGRAIHSAQAYAMNDEFSRVLNQQIEYYSNDPNADTISRIKGEMNQVRDVMIENIDNILDRGERLELLVDKTANMQGNTFRFRKQTRRFNNTVWWRNCKLTLLLILVLLVIIYIGVAFACHGPTLPSCV.

Topologically, residues 1–189 (MSILYALVAR…NNTVWWRNCK (189 aa)) are cytoplasmic. The Longin domain maps to 7-111 (LVARGTVVLA…AMNDEFSRVL (105 aa)). Residues 126 to 186 (TISRIKGEMN…RRFNNTVWWR (61 aa)) form the v-SNARE coiled-coil homology domain. A helical; Anchor for type IV membrane protein transmembrane segment spans residues 190–210 (LTLLLILVLLVIIYIGVAFAC). Over 211-219 (HGPTLPSCV) the chain is Vesicular.

This sequence belongs to the synaptobrevin family. Expressed in flowers, leaves, stems and roots.

It is found in the vacuole membrane. The protein resides in the prevacuolar compartment membrane. In terms of biological role, involved in the targeting and/or fusion of transport vesicles to their target membrane. The chain is Vesicle-associated membrane protein 712 from Arabidopsis thaliana (Mouse-ear cress).